Reading from the N-terminus, the 122-residue chain is Large ribosomal subunit protein uL14 (122 aa).

Belongs to the universal ribosomal protein uL14 family. As to quaternary structure, part of the 50S ribosomal subunit. Forms a cluster with proteins L3 and L19. In the 70S ribosome, L14 and L19 interact and together make contacts with the 16S rRNA in bridges B5 and B8.

In terms of biological role, binds to 23S rRNA. Forms part of two intersubunit bridges in the 70S ribosome. This is Large ribosomal subunit protein uL14 from Staphylococcus carnosus (strain TM300).